Reading from the N-terminus, the 307-residue chain is tRNA pseudouridine synthase B (307 aa).

Asp38 acts as the Nucleophile in catalysis.

Belongs to the pseudouridine synthase TruB family. Type 1 subfamily.

The enzyme catalyses uridine(55) in tRNA = pseudouridine(55) in tRNA. In terms of biological role, responsible for synthesis of pseudouridine from uracil-55 in the psi GC loop of transfer RNAs. In Bacillus cereus (strain ZK / E33L), this protein is tRNA pseudouridine synthase B.